The sequence spans 286 residues: Bifunctional protein FolD (286 aa).

Residues glycine 165–serine 167 and serine 190 contribute to the NADP(+) site.

The protein belongs to the tetrahydrofolate dehydrogenase/cyclohydrolase family. As to quaternary structure, homodimer.

The catalysed reaction is (6R)-5,10-methylene-5,6,7,8-tetrahydrofolate + NADP(+) = (6R)-5,10-methenyltetrahydrofolate + NADPH. It catalyses the reaction (6R)-5,10-methenyltetrahydrofolate + H2O = (6R)-10-formyltetrahydrofolate + H(+). It participates in one-carbon metabolism; tetrahydrofolate interconversion. Catalyzes the oxidation of 5,10-methylenetetrahydrofolate to 5,10-methenyltetrahydrofolate and then the hydrolysis of 5,10-methenyltetrahydrofolate to 10-formyltetrahydrofolate. This chain is Bifunctional protein FolD, found in Staphylococcus aureus (strain bovine RF122 / ET3-1).